Consider the following 351-residue polypeptide: 3-dehydroquinate synthase (351 aa).

NAD(+) is bound by residues 60-65 (DGEEYK), 94-98 (GVISD), 118-119 (TT), Lys-131, Lys-140, and 158-161 (FLKT). Positions 173, 239, and 256 each coordinate Zn(2+).

The protein belongs to the sugar phosphate cyclases superfamily. Dehydroquinate synthase family. The cofactor is NAD(+). Co(2+) serves as cofactor. It depends on Zn(2+) as a cofactor.

It is found in the cytoplasm. It carries out the reaction 7-phospho-2-dehydro-3-deoxy-D-arabino-heptonate = 3-dehydroquinate + phosphate. The protein operates within metabolic intermediate biosynthesis; chorismate biosynthesis; chorismate from D-erythrose 4-phosphate and phosphoenolpyruvate: step 2/7. Functionally, catalyzes the conversion of 3-deoxy-D-arabino-heptulosonate 7-phosphate (DAHP) to dehydroquinate (DHQ). The chain is 3-dehydroquinate synthase from Campylobacter jejuni subsp. jejuni serotype O:2 (strain ATCC 700819 / NCTC 11168).